We begin with the raw amino-acid sequence, 253 residues long: Imidazole glycerol phosphate synthase subunit HisF (253 aa).

Catalysis depends on residues D11 and D130.

Belongs to the HisA/HisF family. Heterodimer of HisH and HisF.

The protein resides in the cytoplasm. It catalyses the reaction 5-[(5-phospho-1-deoxy-D-ribulos-1-ylimino)methylamino]-1-(5-phospho-beta-D-ribosyl)imidazole-4-carboxamide + L-glutamine = D-erythro-1-(imidazol-4-yl)glycerol 3-phosphate + 5-amino-1-(5-phospho-beta-D-ribosyl)imidazole-4-carboxamide + L-glutamate + H(+). It functions in the pathway amino-acid biosynthesis; L-histidine biosynthesis; L-histidine from 5-phospho-alpha-D-ribose 1-diphosphate: step 5/9. IGPS catalyzes the conversion of PRFAR and glutamine to IGP, AICAR and glutamate. The HisF subunit catalyzes the cyclization activity that produces IGP and AICAR from PRFAR using the ammonia provided by the HisH subunit. This chain is Imidazole glycerol phosphate synthase subunit HisF, found in Geobacter metallireducens (strain ATCC 53774 / DSM 7210 / GS-15).